A 570-amino-acid chain; its full sequence is MASVAATTTLAPALAPRRARPGTGLVPPRRASAVAARSTVTSPTWRQRSQRLFPPEPEHYRGPKLKVAIIGAGLAGMSTAVELLDQGHEVDLYESRPFIGGKVGSFVDRQGNHIEMGLHVFFGCYSNLFRLMKKVGADNNLLVKEHTHTFVNKGGTIGELDFRFPVGAPLHGIQAFLRTNQLKVYDKARNAVALALSPVVRALVDPDGALQQVRDLDDISFSDWFMSKGGTRESITRMWDPVRYALGFIDCDNISARCMLTIFTLFATKTEASLLRMLKGSPDVYLSGPIKKYITDRGGRFHLRWGCREVLYEKSPDGETYVKGLLLTKATSREIIKADAYVAACDVPGIKRLLPSEWREWEMFDNIYKLDGVPVVTVQLRYNGWVTELQDLEKSRQLQRAVGLDNLLYTADADFSCFSDLALSSPADYYIEGQGSLIQAVLTPGDPYMPLPNEEIISKVQKQVVELFPSSRGLEVTWSSVVKIGQSLYREAPGNDPFRPDQKTPVKNFFLSGSYTKQDYIDSMEGATLSGRRTSAYICGAGEELLALRKKLLIDDGEKALGNVQVLQAS.

A compositionally biased stretch (low complexity) spans 1–16; that stretch reads MASVAATTTLAPALAP. The segment at 1 to 33 is disordered; it reads MASVAATTTLAPALAPRRARPGTGLVPPRRASA.

It belongs to the zeta carotene desaturase family. The cofactor is NAD(+). It depends on NADP(+) as a cofactor. FAD serves as cofactor.

The protein localises to the plastid. It localises to the chloroplast. It is found in the chromoplast. The catalysed reaction is 9,9'-di-cis-zeta-carotene + 2 a quinone = 7,7',9,9'-tetra-cis-lycopene + 2 a quinol. Its pathway is carotenoid biosynthesis; lycopene biosynthesis. Functionally, catalyzes the conversion of zeta-carotene to lycopene via the intermediary of neurosporene. It carries out two consecutive desaturations (introduction of double bonds) at positions C-7 and C-7'. In Zea mays (Maize), this protein is Zeta-carotene desaturase, chloroplastic/chromoplastic (ZDS1).